A 263-amino-acid chain; its full sequence is Acyl-[acyl-carrier-protein]--UDP-N-acetylglucosamine O-acyltransferase (263 aa).

It belongs to the transferase hexapeptide repeat family. LpxA subfamily. In terms of assembly, homotrimer.

Its subcellular location is the cytoplasm. It carries out the reaction a (3R)-hydroxyacyl-[ACP] + UDP-N-acetyl-alpha-D-glucosamine = a UDP-3-O-[(3R)-3-hydroxyacyl]-N-acetyl-alpha-D-glucosamine + holo-[ACP]. The protein operates within glycolipid biosynthesis; lipid IV(A) biosynthesis; lipid IV(A) from (3R)-3-hydroxytetradecanoyl-[acyl-carrier-protein] and UDP-N-acetyl-alpha-D-glucosamine: step 1/6. In terms of biological role, involved in the biosynthesis of lipid A, a phosphorylated glycolipid that anchors the lipopolysaccharide to the outer membrane of the cell. This chain is Acyl-[acyl-carrier-protein]--UDP-N-acetylglucosamine O-acyltransferase, found in Aeromonas salmonicida (strain A449).